Consider the following 463-residue polypeptide: L-seryl-tRNA(Sec) selenium transferase (463 aa).

Residue Lys-295 is modified to N6-(pyridoxal phosphate)lysine.

The protein belongs to the SelA family. Homodecamer; pentamer of dimers. Binds only one seryl-tRNA(Sec) per dimer. Pyridoxal 5'-phosphate serves as cofactor.

The protein resides in the cytoplasm. The enzyme catalyses L-seryl-tRNA(Sec) + selenophosphate + H(+) = L-selenocysteinyl-tRNA(Sec) + phosphate. It participates in aminoacyl-tRNA biosynthesis; selenocysteinyl-tRNA(Sec) biosynthesis; selenocysteinyl-tRNA(Sec) from L-seryl-tRNA(Sec) (bacterial route): step 1/1. In terms of biological role, converts seryl-tRNA(Sec) to selenocysteinyl-tRNA(Sec) required for selenoprotein biosynthesis. This chain is L-seryl-tRNA(Sec) selenium transferase, found in Escherichia coli (strain SMS-3-5 / SECEC).